Here is a 327-residue protein sequence, read N- to C-terminus: Aspartate carbamoyltransferase catalytic subunit (327 aa).

R54 and T55 together coordinate carbamoyl phosphate. Position 82 (K82) interacts with L-aspartate. Carbamoyl phosphate contacts are provided by R104, H134, and Q137. Residues R177 and R232 each contribute to the L-aspartate site. Residues G280 and P281 each coordinate carbamoyl phosphate.

It belongs to the aspartate/ornithine carbamoyltransferase superfamily. ATCase family. As to quaternary structure, heterododecamer (2C3:3R2) of six catalytic PyrB chains organized as two trimers (C3), and six regulatory PyrI chains organized as three dimers (R2).

It catalyses the reaction carbamoyl phosphate + L-aspartate = N-carbamoyl-L-aspartate + phosphate + H(+). The protein operates within pyrimidine metabolism; UMP biosynthesis via de novo pathway; (S)-dihydroorotate from bicarbonate: step 2/3. Its function is as follows. Catalyzes the condensation of carbamoyl phosphate and aspartate to form carbamoyl aspartate and inorganic phosphate, the committed step in the de novo pyrimidine nucleotide biosynthesis pathway. The sequence is that of Aspartate carbamoyltransferase catalytic subunit from Micrococcus luteus (strain ATCC 4698 / DSM 20030 / JCM 1464 / CCM 169 / CCUG 5858 / IAM 1056 / NBRC 3333 / NCIMB 9278 / NCTC 2665 / VKM Ac-2230) (Micrococcus lysodeikticus).